The following is a 508-amino-acid chain: Sugar transport protein 12 (508 aa).

Over 1–22 the chain is Cytoplasmic; the sequence is MPSVGIVIGDGKKEYPGKLTLY. Helical transmembrane passes span 23–43, 80–100, 118–138, 141–161, 172–192, 201–221, 294–314, 317–337, 347–367, 383–403, 426–446, and 451–471; these read VTVT…DIGI, VSLT…SLVA, VLFC…MLIV, LLLG…LSEM, IGFQ…NFFF, LSLG…LILP, LTGI…IGFG, AALI…VVSI, FLFL…AAAI, WYAI…AWSW, ITVS…LMML, and FGLF…VYLF. Topologically, residues 472–508 are cytoplasmic; the sequence is LPETRGVPIEEMNRVWRSHWYWSKFVDAEKNLTKVVI.

Belongs to the major facilitator superfamily. Sugar transporter (TC 2.A.1.1) family.

The protein localises to the membrane. Functionally, mediates an active uptake of hexoses, probably by sugar/hydrogen symport. The polypeptide is Sugar transport protein 12 (STP12) (Arabidopsis thaliana (Mouse-ear cress)).